A 190-amino-acid chain; its full sequence is Riboflavin transporter FmnP (190 aa).

The Extracellular portion of the chain corresponds to 1–5 (MKVKK). Residues 6–26 (LVVVSMLSSIAFVLMLLNFPF) form a helical membrane-spanning segment. Residues 27–39 (PGLPDYLKIDFSD) are Cytoplasmic-facing. A helical membrane pass occupies residues 40-60 (VPAIIAILIYGPLAGIAVEAI). The Extracellular segment spans residues 61–76 (KNVLQYIIQGSMAGVP). Residues 77–97 (VGQVANFIAGTLFILPTAFLF) traverse the membrane as a helical segment. The Cytoplasmic portion of the chain corresponds to 98-109 (KKLNSAKGLAVS). A helical membrane pass occupies residues 110 to 130 (LLLGTAAMTILMSILNYVLIL). Residues 131 to 154 (PAYTWFLHSPALSDSALKTAVVAG) lie on the Extracellular side of the membrane. The chain crosses the membrane as a helical span at residues 155–175 (ILPFNMIKGIVITVVFSLIFI). Over 176-190 (KLKPWIEQQRSAHIH) the chain is Cytoplasmic.

Belongs to the prokaryotic riboflavin transporter (P-RFT) (TC 2.A.87) family. In terms of assembly, forms a stable energy-coupling factor (ECF) transporter complex composed of a membrane-embedded substrate-binding protein (S component), 2 ATP-binding proteins (A component) and 2 transmembrane proteins (T component). May be able to interact with more than 1 S component at a time.

The protein localises to the cell membrane. Inhibited by excess of riboflavin or FMN. Also inhibited by protonophores such as CCCP and FCCP or in the absence of glucose. Its function is as follows. Mediates uptake of riboflavin and roseoflavin, a toxic riboflavin analog; may also transport FMN. Probably a riboflavin-binding protein that interacts with the energy-coupling factor (ECF) ABC-transporter complex. Unlike classic ABC transporters this ECF transporter provides the energy necessary to transport a number of different substrates. The substrates themselves are bound by transmembrane, not extracytoplasmic soluble proteins. The sequence is that of Riboflavin transporter FmnP (fmnP) from Bacillus subtilis (strain 168).